The sequence spans 396 residues: Elongation factor Tu 2 (396 aa).

The tr-type G domain maps to 10-206 (KPHINVGTIG…VLDSYIPEPQ (197 aa)). Residues 19–26 (GHVDHGKT) form a G1 region. 19–26 (GHVDHGKT) serves as a coordination point for GTP. Thr26 contacts Mg(2+). The segment at 60 to 64 (GITIN) is G2. The tract at residues 81 to 84 (DCPG) is G3. Residues 81-85 (DCPGH) and 136-139 (NKAD) each bind GTP. The interval 136-139 (NKAD) is G4. The interval 174-176 (SAL) is G5.

This sequence belongs to the TRAFAC class translation factor GTPase superfamily. Classic translation factor GTPase family. EF-Tu/EF-1A subfamily. Monomer.

The protein resides in the cytoplasm. It carries out the reaction GTP + H2O = GDP + phosphate + H(+). GTP hydrolase that promotes the GTP-dependent binding of aminoacyl-tRNA to the A-site of ribosomes during protein biosynthesis. The polypeptide is Elongation factor Tu 2 (Nitrosomonas eutropha (strain DSM 101675 / C91 / Nm57)).